Reading from the N-terminus, the 383-residue chain is Putative glutamate--cysteine ligase 2 (383 aa).

Belongs to the glutamate--cysteine ligase type 2 family. YbdK subfamily.

The catalysed reaction is L-cysteine + L-glutamate + ATP = gamma-L-glutamyl-L-cysteine + ADP + phosphate + H(+). Functionally, ATP-dependent carboxylate-amine ligase which exhibits weak glutamate--cysteine ligase activity. The chain is Putative glutamate--cysteine ligase 2 from Clavibacter michiganensis subsp. michiganensis (strain NCPPB 382).